We begin with the raw amino-acid sequence, 72 residues long: uncharacterized protein (72 aa).

Topologically, residues 1–12 (MSKHKHEWTESV) are cytoplasmic. Residues 13–32 (ANSGPASILSYCASSILMTV) traverse the membrane as a helical segment. The Lumenal segment spans residues 33–46 (TNKFVVNLDNFNMN). A helical transmembrane segment spans residues 47 to 69 (FVMLFVQSLVCTVTLCILRIVGV). Residues 70-72 (ANF) lie on the Cytoplasmic side of the membrane.

It belongs to the TPT transporter family. SLC35D subfamily.

It localises to the membrane. This is an uncharacterized protein from Saccharomyces cerevisiae (strain RM11-1a) (Baker's yeast).